Reading from the N-terminus, the 216-residue chain is FMN-dependent NADH:quinone oxidoreductase 3 (216 aa).

Residues Ser10 and Ser16–Ser18 each bind FMN.

It belongs to the azoreductase type 1 family. As to quaternary structure, homodimer. FMN serves as cofactor.

The enzyme catalyses 2 a quinone + NADH + H(+) = 2 a 1,4-benzosemiquinone + NAD(+). The catalysed reaction is N,N-dimethyl-1,4-phenylenediamine + anthranilate + 2 NAD(+) = 2-(4-dimethylaminophenyl)diazenylbenzoate + 2 NADH + 2 H(+). In terms of biological role, quinone reductase that provides resistance to thiol-specific stress caused by electrophilic quinones. Also exhibits azoreductase activity. Catalyzes the reductive cleavage of the azo bond in aromatic azo compounds to the corresponding amines. The protein is FMN-dependent NADH:quinone oxidoreductase 3 of Pseudomonas fluorescens (strain ATCC BAA-477 / NRRL B-23932 / Pf-5).